The chain runs to 297 residues: MAILDEFDEHLALRCGRSEHTRRAYLGDLRSLLTHLEGRGSRLDQLSLPVLRSWLATAAGAGAARTTLARRISAVKAFTAWAKWRGQLAADPAARLQVPRAYRTLPAVLRQDQALQIMAAAKSGAEQGDPLALRDRLIVEMLYATGIRVSELCGLDIDDVDTRHRLVRVLGKGNKQRTAPFGVPAADALRGWLDDGRPALVTVESGPALLLGSRGRRLDVRQARTVVHQTVAVVAGAPDMGPHGLRHSAATHLLEGGADLRVVQELLGHSSLATTQLYTHVAVSRLRVVHDQAHPRA.

The 83-residue stretch at 1 to 83 (MAILDEFDEH…AVKAFTAWAK (83 aa)) folds into the Core-binding (CB) domain. A Tyr recombinase domain is found at 104 to 291 (TLPAVLRQDQ…AVSRLRVVHD (188 aa)). Catalysis depends on residues R148, K172, H243, R246, and H269. Catalysis depends on Y278, which acts as the O-(3'-phospho-DNA)-tyrosine intermediate.

Belongs to the 'phage' integrase family. XerC subfamily. In terms of assembly, forms a cyclic heterotetrameric complex composed of two molecules of XerC and two molecules of XerD.

It is found in the cytoplasm. Site-specific tyrosine recombinase, which acts by catalyzing the cutting and rejoining of the recombining DNA molecules. The XerC-XerD complex is essential to convert dimers of the bacterial chromosome into monomers to permit their segregation at cell division. It also contributes to the segregational stability of plasmids. This chain is Tyrosine recombinase XerC, found in Mycobacterium leprae (strain TN).